A 399-amino-acid chain; its full sequence is MIPLLFILFYFTNCIEWHKFETSEEIISTYLIDDVLYTGVNGAVYTFSNNELNKTGLTNNNNYITTSIKVEDTLVCGTNNGNPKCWKIDGSEDPKYRGRGYAPYQNSKVTIISHNECVLSDINISKEGIKRWRRFDGPCGYDLYTADNVIPKDGVRGAFVDKDGTYDKVYILFTDTIDTKRIVKIPYIAQMCLNDEGGPSSLSSHRWSTFLKVELECDIDGRSYRQIIHSKAIKTDNDTILYVFFDSPYSKSALCTYSMNAIKHSFSTSKLGGYTKQLPSPAPGICLPAGKVVPHTTFDIIEQYNELDDIIKPLSQPIFEGPSGVKWFDIKEKENEHREYRIYFIKENTIYSFDTKSKQTRSAQVDARLFSVMVTSKPLFIADIGIGVGIPRMKKILKM.

A signal peptide spans 1 to 14 (MIPLLFILFYFTNC). The Sema domain maps to 15-399 (IEWHKFETSE…IPRMKKILKM (385 aa)).

This sequence belongs to the semaphorin family. Interacts with host VESPR.

Its subcellular location is the secreted. Its function is as follows. Acts as a semaphorin-like protein and binds to host plexin C1 receptor. May alter the movement of plexin C1-expressing cells including dendritic cells, monocytes, or granulocytes in the proximity of infected cells. May also regulate host cell cytoskeleton of neighboring cells to improve viral infection. In Ectromelia virus (strain Moscow) (ECTV), this protein is Semaphorin-like protein 139 (EVM139).